A 366-amino-acid chain; its full sequence is tRNA(Met) cytidine acetate ligase (366 aa).

ATP is bound by residues 7–20 (IAEF…HQYL), glycine 96, asparagine 152, and arginine 175.

It belongs to the TmcAL family.

Its subcellular location is the cytoplasm. The catalysed reaction is cytidine(34) in elongator tRNA(Met) + acetate + ATP = N(4)-acetylcytidine(34) in elongator tRNA(Met) + AMP + diphosphate. In terms of biological role, catalyzes the formation of N(4)-acetylcytidine (ac(4)C) at the wobble position of elongator tRNA(Met), using acetate and ATP as substrates. First activates an acetate ion to form acetyladenylate (Ac-AMP) and then transfers the acetyl group to tRNA to form ac(4)C34. The chain is tRNA(Met) cytidine acetate ligase from Streptococcus equi subsp. zooepidemicus (strain MGCS10565).